Here is a 457-residue protein sequence, read N- to C-terminus: Argininosuccinate lyase (457 aa).

Belongs to the lyase 1 family. Argininosuccinate lyase subfamily.

The protein localises to the cytoplasm. The catalysed reaction is 2-(N(omega)-L-arginino)succinate = fumarate + L-arginine. Its pathway is amino-acid biosynthesis; L-arginine biosynthesis; L-arginine from L-ornithine and carbamoyl phosphate: step 3/3. The polypeptide is Argininosuccinate lyase (Escherichia coli O127:H6 (strain E2348/69 / EPEC)).